Consider the following 609-residue polypeptide: Cationic amino acid transporter 3, mitochondrial (609 aa).

A mitochondrion-targeting transit peptide spans Met1–Asp14. 14 consecutive transmembrane segments (helical) span residues Leu38–Val58, Ala66–Ala86, Ile104–Ile124, Ile161–Gly181, Gly190–Leu210, Phe226–Gly246, Ile270–Val290, Ala314–Leu334, Gln361–Met381, Gly388–Val408, Ile474–Pro494, Tyr499–Ile519, Phe534–Leu554, and Gly558–Phe578.

The protein belongs to the amino acid-polyamine-organocation (APC) superfamily. Cationic amino acid transporter (CAT) (TC 2.A.3.3) family. Expressed in roots, stems, flowers, and leaves.

The protein resides in the mitochondrion membrane. Functionally, permease involved in the transport of the cationic neutral or acidic amino acids. The chain is Cationic amino acid transporter 3, mitochondrial (CAT3) from Arabidopsis thaliana (Mouse-ear cress).